The sequence spans 156 residues: Cyanate hydratase (156 aa).

Catalysis depends on residues arginine 96, glutamate 99, and serine 122.

It belongs to the cyanase family.

The enzyme catalyses cyanate + hydrogencarbonate + 3 H(+) = NH4(+) + 2 CO2. Catalyzes the reaction of cyanate with bicarbonate to produce ammonia and carbon dioxide. This chain is Cyanate hydratase, found in Escherichia coli (strain ATCC 8739 / DSM 1576 / NBRC 3972 / NCIMB 8545 / WDCM 00012 / Crooks).